The chain runs to 326 residues: tRNA uridine(34) hydroxylase (326 aa).

The region spanning 123 to 217 is the Rhodanese domain; the sequence is SDPDVILVDT…YLEEVKQEES (95 aa). The active-site Cysteine persulfide intermediate is the cysteine 177.

It belongs to the TrhO family.

It carries out the reaction uridine(34) in tRNA + AH2 + O2 = 5-hydroxyuridine(34) in tRNA + A + H2O. Catalyzes oxygen-dependent 5-hydroxyuridine (ho5U) modification at position 34 in tRNAs. This is tRNA uridine(34) hydroxylase from Shewanella denitrificans (strain OS217 / ATCC BAA-1090 / DSM 15013).